The chain runs to 98 residues: uncharacterized protein (98 aa).

The protein belongs to the HesB/IscA family.

This is an uncharacterized protein from Staphylococcus saprophyticus subsp. saprophyticus (strain ATCC 15305 / DSM 20229 / NCIMB 8711 / NCTC 7292 / S-41).